The chain runs to 400 residues: MGGRLPKPRKGMGTNLSVPNPLGFFPDHQLDPAFGANSNNPDWDFNPIKDHWPQANQVGVGAFGPGFTPPHGGVLGWSPQAQGTLTTVPAVPPPASTNRQSGRQPTPISPPLRDSHPQAMQWNSTKFHQTLQDPRVRGLYFPAGGSSSGTVNPAPNIASHISSISSRIGDPAPTMENITSGFLGPLLVLQAGFFLLTRILTIPQSLDSWWTSLNFLGEAPVCLGQNSQSPTSNHSPTSCPPICPGYRWMCLRRFIIFLFILLLCLIFLLVLLDCQGMLPVCPLIPGSTTTSTGPCRTCTTPAQGNSMFPSCCCTKPTDGNCTCIPIPSSWAFAKYLWEWASVRFSWLSLLVPFVQWFVGLSPTVWLSVIWMMWYWGPSLYNILSPFIPLLPIFFCLWVYI.

Met-1 carries the N-acetylmethionine modification. Gly-2 carries N-myristoyl glycine; by host lipidation. The tract at residues 2 to 119 (GGRLPKPRKG…PPLRDSHPQA (118 aa)) is pre-S1. The segment at 2-174 (GGRLPKPRKG…SSRIGDPAPT (173 aa)) is pre-S. Residues 2–181 (GGRLPKPRKG…APTMENITSG (180 aa)) are Virion surface; in external conformation-facing. Topologically, residues 2–253 (GGRLPKPRKG…PGYRWMCLRR (252 aa)) are intravirion; in internal conformation. An N-linked (GlcNAc...) asparagine glycan is attached at Arg-4. The tract at residues 84–116 (TLTTVPAVPPPASTNRQSGRQPTPISPPLRDSH) is disordered. The segment covering 96-106 (STNRQSGRQPT) has biased composition (polar residues). Residues 120 to 174 (MQWNSTKFHQTLQDPRVRGLYFPAGGSSSGTVNPAPNIASHISSISSRIGDPAPT) form a pre-S2 region. A helical transmembrane segment spans residues 182-202 (FLGPLLVLQAGFFLLTRILTI). Residues 203–253 (PQSLDSWWTSLNFLGEAPVCLGQNSQSPTSNHSPTSCPPICPGYRWMCLRR) are Intravirion; in external conformation-facing. The helical transmembrane segment at 254-274 (FIIFLFILLLCLIFLLVLLDC) threads the bilayer. Residues 275–348 (QGMLPVCPLI…WASVRFSWLS (74 aa)) are Virion surface-facing. An N-linked (GlcNAc...) asparagine; by host glycan is attached at Asn-320. The helical transmembrane segment at 349–369 (LLVPFVQWFVGLSPTVWLSVI) threads the bilayer. Over 370-375 (WMMWYW) the chain is Intravirion. A helical transmembrane segment spans residues 376 to 398 (GPSLYNILSPFIPLLPIFFCLWV). The Virion surface segment spans residues 399–400 (YI).

The protein belongs to the orthohepadnavirus major surface antigen family. In terms of assembly, in its internal form (Li-HBsAg), interacts with the capsid protein and with the isoform S. Interacts with host chaperone CANX. Associates with host chaperone CANX through its pre-S2 N glycan; this association may be essential for isoform M proper secretion. As to quaternary structure, interacts with isoform L. Interacts with the antigens of satellite virus HDV (HDVAgs); this interaction is required for encapsidation of HDV genomic RNA. In terms of processing, isoform M is N-terminally acetylated by host at a ratio of 90%, and N-glycosylated by host at the pre-S2 region. Post-translationally, myristoylated.

It is found in the virion membrane. Functionally, the large envelope protein exists in two topological conformations, one which is termed 'external' or Le-HBsAg and the other 'internal' or Li-HBsAg. In its external conformation the protein attaches the virus to cell receptors and thereby initiating infection. This interaction determines the species specificity and liver tropism. This attachment induces virion internalization predominantly through caveolin-mediated endocytosis. The large envelope protein also assures fusion between virion membrane and endosomal membrane. In its internal conformation the protein plays a role in virion morphogenesis and mediates the contact with the nucleocapsid like a matrix protein. Its function is as follows. The middle envelope protein plays an important role in the budding of the virion. It is involved in the induction of budding in a nucleocapsid independent way. In this process the majority of envelope proteins bud to form subviral lipoprotein particles of 22 nm of diameter that do not contain a nucleocapsid. The sequence is that of Large envelope protein from Hepatitis B virus genotype A3 (isolate Cameroon/CMR711/1994) (HBV-A).